The chain runs to 503 residues: TGF-beta receptor type-1 (503 aa).

A signal peptide spans 1–29 (MEVAAGAPRSRLLLFVLAATATLAPEATA). Residues 30-126 (FQCFCHLCTK…PPSGLGPVEL (97 aa)) are Extracellular-facing. 5 disulfides stabilise this stretch: C32–C50, C34–C37, C44–C67, C82–C96, and C97–C102. N-linked (GlcNAc...) asparagine glycosylation is present at N41. The chain crosses the membrane as a helical span at residues 127-147 (AAVIAGPVCFVCISLMLMVYI). Over 148–503 (CHNRTVIHHR…QLSQQEGIKM (356 aa)) the chain is Cytoplasmic. A Phosphoserine modification is found at S165. The 30-residue stretch at 175-204 (TTLKDLIYDMTTSGSGSGLPLLVQRTIART) folds into the GS domain. Phosphothreonine; by TGFBR2 is present on residues T185 and T186. Residues S187, S189, and S191 each carry the phosphoserine; by TGFBR2 modification. The FKBP1A-binding motif lies at 193–194 (LP). Residues 205-495 (IVLQESIGKG…LRIKKTLSQL (291 aa)) enclose the Protein kinase domain. Residues 211–219 (IGKGRFGEV) and K232 contribute to the ATP site. Residue D333 is the Proton acceptor of the active site. K391 participates in a covalent cross-link: Glycyl lysine isopeptide (Lys-Gly) (interchain with G-Cter in SUMO).

The protein belongs to the protein kinase superfamily. TKL Ser/Thr protein kinase family. TGFB receptor subfamily. In terms of assembly, homodimer; in the endoplasmic reticulum but also at the cell membrane. Heterohexamer; TGFB1, TGFB2 and TGFB3 homodimeric ligands assemble a functional receptor composed of two TGFBR1 and TGFBR2 heterodimers to form a ligand-receptor heterohexamer. The respective affinity of TGBRB1 and TGFBR2 for the ligands may modulate the kinetics of assembly of the receptor and may explain the different biological activities of TGFB1, TGFB2 and TGFB3. Component of a complex composed of TSC22D1 (via N-terminus), TGFBR1 and TGFBR2; the interaction between TSC22D1 and TGFBR1 is inhibited by SMAD7 and promoted by TGFB1. Interacts with CD109; inhibits TGF-beta receptor activation in keratinocytes. Interacts with RBPMS. Interacts (unphosphorylated) with FKBP1A; prevents TGFBR1 phosphorylation by TGFBR2 and stabilizes it in the inactive conformation. Interacts with SMAD2, SMAD3 and ZFYVE9; ZFYVE9 recruits SMAD2 and SMAD3 to the TGF-beta receptor. Interacts with TRAF6 and MAP3K7; induces MAP3K7 activation by TRAF6. Interacts with PARD6A; involved in TGF-beta induced epithelial to mesenchymal transition. Interacts with NEDD4L. Interacts with SMAD7, SMURF1 and SMURF2; SMAD7 recruits NEDD4L, SMURF1 and SMURF2 to the TGF-beta receptor. Interacts with USP15 and VPS39. Interacts with SDCBP (via C-terminus). Interacts with CAV1 and this interaction is impaired in the presence of SDCBP. Interacts with APPL1; interaction is TGF beta dependent; mediates trafficking of the TGFBR1 from the endosomes to the nucleus via microtubules in a TRAF6-dependent manner. Interacts with GPR50; this interaction promotes the constitutive activation of SMAD signaling pathway. Mg(2+) is required as a cofactor. The cofactor is Mn(2+). Phosphorylated at basal levels in the absence of ligand. Activated upon phosphorylation by TGFBR2, mainly in the GS domain. Phosphorylation in the GS domain abrogates FKBP1A-binding. In terms of processing, N-Glycosylated. Post-translationally, ubiquitinated; undergoes ubiquitination catalyzed by several E3 ubiquitin ligases including SMURF1, SMURF2 and NEDD4L2. Results in the proteasomal and/or lysosomal degradation of the receptor thereby negatively regulating its activity. Deubiquitinated by USP15, leading to stabilization of the protein and enhanced TGF-beta signal. Its ubiquitination and proteasome-mediated degradation is negatively regulated by SDCBP.

The protein resides in the cell membrane. It is found in the cell junction. It localises to the tight junction. Its subcellular location is the membrane raft. The protein localises to the cell surface. The enzyme catalyses L-threonyl-[receptor-protein] + ATP = O-phospho-L-threonyl-[receptor-protein] + ADP + H(+). It catalyses the reaction L-seryl-[receptor-protein] + ATP = O-phospho-L-seryl-[receptor-protein] + ADP + H(+). Kept in an inactive conformation by FKBP1A preventing receptor activation in absence of ligand. CD109 is another inhibitor of the receptor. Functionally, transmembrane serine/threonine kinase forming with the TGF-beta type II serine/threonine kinase receptor, TGFBR2, the non-promiscuous receptor for the TGF-beta cytokines TGFB1, TGFB2 and TGFB3. Transduces the TGFB1, TGFB2 and TGFB3 signal from the cell surface to the cytoplasm and is thus regulating a plethora of physiological and pathological processes including cell cycle arrest in epithelial and hematopoietic cells, control of mesenchymal cell proliferation and differentiation, wound healing, extracellular matrix production, immunosuppression and carcinogenesis. The formation of the receptor complex composed of 2 TGFBR1 and 2 TGFBR2 molecules symmetrically bound to the cytokine dimer results in the phosphorylation and the activation of TGFBR1 by the constitutively active TGFBR2. Activated TGFBR1 phosphorylates SMAD2 which dissociates from the receptor and interacts with SMAD4. The SMAD2-SMAD4 complex is subsequently translocated to the nucleus where it modulates the transcription of the TGF-beta-regulated genes. This constitutes the canonical SMAD-dependent TGF-beta signaling cascade. Also involved in non-canonical, SMAD-independent TGF-beta signaling pathways. For instance, TGFBR1 induces TRAF6 autoubiquitination which in turn results in MAP3K7 ubiquitination and activation to trigger apoptosis. Also regulates epithelial to mesenchymal transition through a SMAD-independent signaling pathway through PARD6A phosphorylation and activation. In Sus scrofa (Pig), this protein is TGF-beta receptor type-1 (TGFBR1).